Here is a 278-residue protein sequence, read N- to C-terminus: Urease accessory protein UreD (278 aa).

This sequence belongs to the UreD family. UreD, UreF and UreG form a complex that acts as a GTP-hydrolysis-dependent molecular chaperone, activating the urease apoprotein by helping to assemble the nickel containing metallocenter of UreC. The UreE protein probably delivers the nickel.

The protein resides in the cytoplasm. Functionally, required for maturation of urease via the functional incorporation of the urease nickel metallocenter. The polypeptide is Urease accessory protein UreD (Blochmanniella pennsylvanica (strain BPEN)).